The following is a 786-amino-acid chain: Protein RDM16 (786 aa).

Basic and acidic residues-rich tracts occupy residues 1-80 (MDKE…SRDR), 87-112 (RSHE…GARD), and 123-143 (NGER…KDAQ). Disordered stretches follow at residues 1–223 (MDKE…SANL), 255–283 (KKAT…STGT), 532–557 (RPIE…EQKK), and 616–642 (EREQ…KERK). Positions 145–164 (SEGSGATNPTSGVTMGASTY) are enriched in polar residues. Positions 165 to 176 (SSIPSEASAAPS) are enriched in low complexity. The span at 177 to 189 (QTLLTKVSSISTT) shows a compositional bias: polar residues. Positions 190–203 (DENKASVVRSHEVP) are enriched in basic and acidic residues. The span at 268–283 (TRVPPSTTTPAVSTGT) shows a compositional bias: low complexity. Over residues 534–547 (IEPPAEAAPPPPQP) the composition is skewed to pro residues.

The protein resides in the nucleus. The protein localises to the nucleoplasm. Its function is as follows. Functions in the RNA-directed DNA methylation (RdDM) pathway. Acts as a pre-mRNA splicing factor, likely by affecting Pol V transcripts. Affects DNA methylation of transposable elements (TEs) and preferentially influences NRPD1- and ROS1-targeted loci. This is Protein RDM16 from Arabidopsis thaliana (Mouse-ear cress).